A 370-amino-acid polypeptide reads, in one-letter code: MVEADRPGKLFIGGLNTETNEKALEAVFCKYGRVVEVLLMKDRETNKSRGFAFVTFESPADAKDAARELNGKALDGKPIKVEQATKPSFSTPSRRGPPTSPRSRGPPRGLRGSRGGGSSRGQMPLKRGPPPRSGGPPPKRSAPSGPLRSSEMGGRAPLSRERDGYGAPPRRDPMPSRRDVYMSPRDDGYSGKDRYDGYSGRDYGSSRDSRDYGPPPRDYSYRDYGHSSSRDDYGSRGYSDRDGYGGRDSRDYSDHQSGGSYRDSYEGYGNSRSAPPARGPPPSYGGSSRYDDYSSTRDGYGGRDSYSSSRNDIYSSGRDRVGRQERGLPPSMDRGYPPPRDSYSSSSRGGPRGGGRGGSRSDRGGGRSRY.

In terms of domain architecture, RRM spans 8 to 86; sequence GKLFIGGLNT…KPIKVEQATK (79 aa). Positions 69–80 are enriched in basic and acidic residues; sequence LNGKALDGKPIK. The disordered stretch occupies residues 69-370; it reads LNGKALDGKP…SDRGGGRSRY (302 aa). Residues 87 to 110 are compositionally biased toward low complexity; it reads PSFSTPSRRGPPTSPRSRGPPRGL. Positions 127–140 are enriched in pro residues; it reads RGPPPRSGGPPPKR. Composition is skewed to basic and acidic residues over residues 158–196 and 219–254; these read LSRE…DRYD and YSYR…DYSD. Over residues 303–316 the composition is skewed to low complexity; that stretch reads RDSYSSSRNDIYSS. Composition is skewed to basic and acidic residues over residues 317-326 and 359-370; these read GRDRVGRQER and SRSDRGGGRSRY.

The protein resides in the nucleus. RNA-binding protein that plays several role in the regulation of pre- and post-transcriptional processes. Implicated in tissue-specific regulation of gene transcription and alternative splicing of pre-mRNAs. Associates with chromatin. Associates with nascent mRNAs transcribed by RNA polymerase II. Component of the supraspliceosome complex that regulates pre-mRNA alternative splice site selection. Binds non-specifically to pre-mRNAs. Required for embryonic development, in particular of the brain. This is RNA-binding motif protein, X chromosome (rbmx) from Xenopus laevis (African clawed frog).